Reading from the N-terminus, the 186-residue chain is Pyridoxal 5'-phosphate synthase subunit PdxT (186 aa).

47-49 is a binding site for L-glutamine; sequence GES. Residue Cys79 is the Nucleophile of the active site. Residues Arg106 and 134–135 each bind L-glutamine; that span reads IR. Catalysis depends on charge relay system residues His170 and Glu172.

The protein belongs to the glutaminase PdxT/SNO family. In the presence of PdxS, forms a dodecamer of heterodimers. Only shows activity in the heterodimer.

The catalysed reaction is aldehydo-D-ribose 5-phosphate + D-glyceraldehyde 3-phosphate + L-glutamine = pyridoxal 5'-phosphate + L-glutamate + phosphate + 3 H2O + H(+). The enzyme catalyses L-glutamine + H2O = L-glutamate + NH4(+). It functions in the pathway cofactor biosynthesis; pyridoxal 5'-phosphate biosynthesis. Functionally, catalyzes the hydrolysis of glutamine to glutamate and ammonia as part of the biosynthesis of pyridoxal 5'-phosphate. The resulting ammonia molecule is channeled to the active site of PdxS. The protein is Pyridoxal 5'-phosphate synthase subunit PdxT of Methanothrix thermoacetophila (strain DSM 6194 / JCM 14653 / NBRC 101360 / PT) (Methanosaeta thermophila).